We begin with the raw amino-acid sequence, 292 residues long: UDP-3-O-acyl-N-acetylglucosamine deacetylase (292 aa).

Residues H75, H231, and D235 each contribute to the Zn(2+) site. H258 (proton donor) is an active-site residue.

Belongs to the LpxC family. Zn(2+) is required as a cofactor.

The catalysed reaction is a UDP-3-O-[(3R)-3-hydroxyacyl]-N-acetyl-alpha-D-glucosamine + H2O = a UDP-3-O-[(3R)-3-hydroxyacyl]-alpha-D-glucosamine + acetate. Its pathway is glycolipid biosynthesis; lipid IV(A) biosynthesis; lipid IV(A) from (3R)-3-hydroxytetradecanoyl-[acyl-carrier-protein] and UDP-N-acetyl-alpha-D-glucosamine: step 2/6. Its function is as follows. Catalyzes the hydrolysis of UDP-3-O-myristoyl-N-acetylglucosamine to form UDP-3-O-myristoylglucosamine and acetate, the committed step in lipid A biosynthesis. This Nautilia profundicola (strain ATCC BAA-1463 / DSM 18972 / AmH) protein is UDP-3-O-acyl-N-acetylglucosamine deacetylase.